Consider the following 491-residue polypeptide: Acetyl-coenzyme A carboxylase carboxyl transferase subunit beta, chloroplastic (491 aa).

One can recognise a CoA carboxyltransferase N-terminal domain in the interval 224–491 (LWIQCENCYG…FFPLNPKKIK (268 aa)). Zn(2+)-binding residues include Cys-228, Cys-231, Cys-247, and Cys-250. A C4-type zinc finger spans residues 228–250 (CENCYGLNYKKNLKSKINICEQC).

It belongs to the AccD/PCCB family. Acetyl-CoA carboxylase is a heterohexamer composed of biotin carboxyl carrier protein, biotin carboxylase and 2 subunits each of ACCase subunit alpha and ACCase plastid-coded subunit beta (accD). It depends on Zn(2+) as a cofactor.

It is found in the plastid. Its subcellular location is the chloroplast stroma. It catalyses the reaction N(6)-carboxybiotinyl-L-lysyl-[protein] + acetyl-CoA = N(6)-biotinyl-L-lysyl-[protein] + malonyl-CoA. It participates in lipid metabolism; malonyl-CoA biosynthesis; malonyl-CoA from acetyl-CoA: step 1/1. In terms of biological role, component of the acetyl coenzyme A carboxylase (ACC) complex. Biotin carboxylase (BC) catalyzes the carboxylation of biotin on its carrier protein (BCCP) and then the CO(2) group is transferred by the transcarboxylase to acetyl-CoA to form malonyl-CoA. This Vitis vinifera (Grape) protein is Acetyl-coenzyme A carboxylase carboxyl transferase subunit beta, chloroplastic.